Reading from the N-terminus, the 146-residue chain is BCL7-like protein (146 aa).

The interval 59–146 (MAPPKIKEVK…RDAEMTSKQP (88 aa)) is disordered. Composition is skewed to polar residues over residues 75–90 (NQVP…TSVT) and 113–134 (DSNQ…TDFS). Positions 135–146 (SMRDAEMTSKQP) are enriched in basic and acidic residues.

It belongs to the BCL7 family. Ubiquitous.

Its subcellular location is the nucleus. Required for the terminal differentiation of seam cells, and the differentiation of distal tip cells important for normal somatic gonad and germ cell development. Plays a role in the Wnt signaling pathway, regulating the expression of beta-catenin homologs wrm-1, bar-1 and sys-1, and the localization of wrm-1 and the wnt signaling pathway component pop-1 during asymmetric cell division of seam cells and the Z-cell lineage of the somatic gonad, respectively. May have a pro-apoptotic role, possibly linked to the negative regulation of expression of anti-apoptotic factor ced-9. The protein is BCL7-like protein of Caenorhabditis elegans.